Here is a 207-residue protein sequence, read N- to C-terminus: Vascular endothelial growth factor B (207 aa).

A signal peptide spans Met-1–Ala-21. 3 disulfides stabilise this stretch: Cys-47-Cys-89, Cys-78-Cys-122, and Cys-82-Cys-124. Over residues Lys-129 to Ala-139 the composition is skewed to basic and acidic residues. The disordered stretch occupies residues Lys-129 to Leu-178.

The protein belongs to the PDGF/VEGF growth factor family. As to quaternary structure, homodimer; disulfide-linked. Can also form heterodimer with VEGF. Post-translationally, VEGF-B186 is O-glycosylated. As to expression, abundantly expressed in heart, brain, kidney and skeletal muscle.

It is found in the secreted. Growth factor for endothelial cells. VEGF-B167 binds heparin and neuropilin-1 whereas the binding to neuropilin-1 of VEGF-B186 is regulated by proteolysis. VEGF-B seems to be required for normal heart function in adult but is not required for proper development of the cardiovascular system either during development or for angiogenesis in adults. This is Vascular endothelial growth factor B (Vegfb) from Mus musculus (Mouse).